A 305-amino-acid polypeptide reads, in one-letter code: Aquaporin-1 (305 aa).

Residues 1–34 are disordered; that stretch reads MSSNDSNDTDKQHTRLDPTGVDDAYIPPEQPETK. The Cytoplasmic segment spans residues 1–48; it reads MSSNDSNDTDKQHTRLDPTGVDDAYIPPEQPETKHHRFKISKDTLRNH. The chain crosses the membrane as a helical span at residues 49-69; it reads FIAAAGEFCGTFMFLWCAYVI. At 70–91 the chain is on the extracellular side; the sequence is CNVANHDVALVAAPDGSHPGQL. Residues 92–112 traverse the membrane as a helical segment; sequence IMIAIGFGFSVMFSIWCFAGV. At 113–136 the chain is on the cytoplasmic side; sequence SGGALNPAMSLSLCLARAVSPTRC. Residues 118 to 120 carry the NPA 1 motif; that stretch reads NPA. Residues 137–157 form a helical membrane-spanning segment; it reads VVMWVSQIVAGMAAGGAASAM. The Extracellular segment spans residues 158–176; that stretch reads TPGEVLFANSLGLGCSRTR. A helical membrane pass occupies residues 177 to 197; the sequence is GLFLEMFGTAILCLTVLMTAV. Over 198–203 the chain is Cytoplasmic; the sequence is EKRETN. A helical membrane pass occupies residues 204 to 224; it reads FMAALPIGISLFIAHVALTAY. At 225–248 the chain is on the extracellular side; sequence TGTGVNPARSLGAAVAARYFPHYH. The NPA 2 signature appears at 230–232; that stretch reads NPA. A helical transmembrane segment spans residues 249 to 269; it reads WIYWIGTLLGSILAWSVWQLL. The Cytoplasmic segment spans residues 270 to 305; it reads QILDYTTYVTAEKAASTKEKAQKKGETSSSSAVAEV. A compositionally biased stretch (basic and acidic residues) spans 286–295; the sequence is TKEKAQKKGE. The interval 286–305 is disordered; that stretch reads TKEKAQKKGETSSSSAVAEV. Polar residues predominate over residues 296 to 305; that stretch reads TSSSSAVAEV.

Belongs to the MIP/aquaporin (TC 1.A.8) family.

It localises to the endoplasmic reticulum membrane. Its subcellular location is the cell membrane. In terms of biological role, water channel required to facilitate the transport of water across membranes. Involved in sporulation, freeze tolerance and osmotolerance. Is non-functional in most laboratory strains. This is Aquaporin-1 (AQY1) from Saccharomyces cerevisiae (strain YJM789) (Baker's yeast).